Here is a 298-residue protein sequence, read N- to C-terminus: Rhodomycin D methylesterase DauP (298 aa).

In terms of domain architecture, AB hydrolase-1 spans 25–277 (PLLLIAGGNL…VEIENMGHAL (253 aa)).

The protein belongs to the methyl esterase DnrP family.

It catalyses the reaction rhodomycin D + H2O = 10-carboxy-13-deoxycarminomycin + methanol + H(+). The catalysed reaction is 4-O-methylrhodomycin D + H2O = 10-carboxy-13-deoxydaunorubicin + methanol + H(+). It functions in the pathway antibiotic biosynthesis; daunorubicin biosynthesis. Its pathway is antibiotic biosynthesis; carminomycin biosynthesis. Involved in the biosynthesis of the anthracyclines carminomycin and daunorubicin (daunomycin) which are aromatic polyketide antibiotics that exhibit high cytotoxicity and are widely applied in the chemotherapy of a variety of cancers. Catalyzes the removal of methyl group from the carbomethoxy group of rhodomycin D (10-carbomethoxy-13-deoxycarminomycin) and 4-O-methylrhodomycin D to yield 10-carboxy-13-deoxycarminomycin and 10-carboxy-13-deoxydaunorubicin, respectively. Could be also involved in the decarboxylation of 10-carboxy-13-deoxycarminomycin and 10-carboxy-13-deoxydaunorubicin to yield 13-deoxycarminomycin and 13-deoxydaunorubicin, respectively. It seems that DauK may influence the ability of DauP to carry out the decarboxylation. This is Rhodomycin D methylesterase DauP (dauP) from Streptomyces sp. (strain C5).